A 338-amino-acid polypeptide reads, in one-letter code: uncharacterized protein (338 aa).

In terms of domain architecture, Radical SAM core spans 111-334 (HLGEERVLVP…LELAEKYNLD (224 aa)). Residues cysteine 129, cysteine 133, and cysteine 136 each contribute to the [4Fe-4S] cluster site.

[4Fe-4S] cluster is required as a cofactor.

This is an uncharacterized protein from Methanocaldococcus jannaschii (strain ATCC 43067 / DSM 2661 / JAL-1 / JCM 10045 / NBRC 100440) (Methanococcus jannaschii).